We begin with the raw amino-acid sequence, 311 residues long: Pyrimidine-specific ribonucleoside hydrolase RihA (311 aa).

The active site involves H240.

It belongs to the IUNH family. RihA subfamily.

In terms of biological role, hydrolyzes cytidine or uridine to ribose and cytosine or uracil, respectively. This Salmonella paratyphi B (strain ATCC BAA-1250 / SPB7) protein is Pyrimidine-specific ribonucleoside hydrolase RihA.